A 408-amino-acid polypeptide reads, in one-letter code: MSWDQVWIDINIATMSPNISEPYGAIRDAALAVKDGKIAWIGKRCDLPEFDVLATPIYKGKNGWLTPGLIDAHTHLVFAGNRANEFELRLQGASYEEIARNGGGIISTVNACREADEAELFELGRQRLNALAKEGVTTVEIKSGYGLDIETELKILRVARELGKHHHVDVKTTFLGAHAIPPEYKNDSDAYVDLVINEMLPQVIAENLADAVDVFCENIAFSLAQTERVLTAAKNAGLDIKLHAEQLSNLGGSEMAAKLGAKSVDHIEYLDEDGVKALSESGTCATLLPGAFYFLRETQLPPIELLRQYKVPMVVASDYNPGSSPLCSSLLMLNMACTLMRLTPEEALAGMTRNAAKALGIEAEVGVLETGMTADFCLWNISTPAELSYTYGVGSCIEVVKNGRLVHQ.

Fe(3+)-binding residues include His73 and His75. Residues His73 and His75 each contribute to the Zn(2+) site. Arg82, Tyr145, and His178 together coordinate 4-imidazolone-5-propanoate. Residue Tyr145 coordinates N-formimidoyl-L-glutamate. His243 contributes to the Fe(3+) binding site. A Zn(2+)-binding site is contributed by His243. A 4-imidazolone-5-propanoate-binding site is contributed by Gln246. Asp318 lines the Fe(3+) pocket. Residue Asp318 coordinates Zn(2+). N-formimidoyl-L-glutamate is bound by residues Asn320 and Gly322. Ser323 is a binding site for 4-imidazolone-5-propanoate.

Belongs to the metallo-dependent hydrolases superfamily. HutI family. Requires Zn(2+) as cofactor. Fe(3+) is required as a cofactor.

The protein localises to the cytoplasm. It carries out the reaction 4-imidazolone-5-propanoate + H2O = N-formimidoyl-L-glutamate. The protein operates within amino-acid degradation; L-histidine degradation into L-glutamate; N-formimidoyl-L-glutamate from L-histidine: step 3/3. Functionally, catalyzes the hydrolytic cleavage of the carbon-nitrogen bond in imidazolone-5-propanoate to yield N-formimidoyl-L-glutamate. It is the third step in the universal histidine degradation pathway. The polypeptide is Imidazolonepropionase (Shewanella piezotolerans (strain WP3 / JCM 13877)).